The primary structure comprises 654 residues: Meiotically up-regulated gene 24 protein (654 aa).

An RRM 1 domain is found at 299–355 (RNVFIGNLPSSYHEKEIEEAFGKFGKIEHIKILSKKNIAFVHFLNIRDAIKVVRTLS). The segment at 383–404 (SCFTSKQNPDTTSDRCRQQESK) is disordered. Residues 384–393 (CFTSKQNPDT) show a composition bias toward polar residues. Residues 394 to 404 (TSDRCRQQESK) are compositionally biased toward basic and acidic residues. 2 consecutive RRM domains span residues 409-482 (RTVF…WGKE) and 500-571 (RNVY…YAPD).

The protein localises to the cytoplasm. In terms of biological role, has a role in meiosis. The polypeptide is Meiotically up-regulated gene 24 protein (mug24) (Schizosaccharomyces pombe (strain 972 / ATCC 24843) (Fission yeast)).